Reading from the N-terminus, the 189-residue chain is Peptide deformylase (189 aa).

Fe cation contacts are provided by Cys98 and His140. Glu141 is a catalytic residue. Residue His144 coordinates Fe cation.

Belongs to the polypeptide deformylase family. Fe(2+) serves as cofactor.

The enzyme catalyses N-terminal N-formyl-L-methionyl-[peptide] + H2O = N-terminal L-methionyl-[peptide] + formate. Functionally, removes the formyl group from the N-terminal Met of newly synthesized proteins. Requires at least a dipeptide for an efficient rate of reaction. N-terminal L-methionine is a prerequisite for activity but the enzyme has broad specificity at other positions. The protein is Peptide deformylase of Porphyromonas gingivalis (strain ATCC 33277 / DSM 20709 / CIP 103683 / JCM 12257 / NCTC 11834 / 2561).